Consider the following 217-residue polypeptide: Vesicle-associated membrane protein 723 (217 aa).

Residues 1 to 192 (MAQQSLFYSF…KWFQNMKIKL (192 aa)) lie on the Cytoplasmic side of the membrane. Residues 10-114 (FIARGTVILV…SLNKEFGSNL (105 aa)) enclose the Longin domain. One can recognise a v-SNARE coiled-coil homology domain in the interval 130 to 186 (NLAKAKAQVSEVKSLMMENIEKVLARGVICEMLGSSESQPQAFYIKRTQMKRKKWFQ). The chain crosses the membrane as a helical; Anchor for type IV membrane protein span at residues 193 to 213 (IVLAIIIALILIIILSVCGGF). Topologically, residues 214 to 217 (NCGK) are vesicular.

Belongs to the synaptobrevin family. In terms of tissue distribution, highly expressed in stems and roots. Detected in flowers and leaves.

It is found in the endoplasmic reticulum membrane. Involved in the targeting and/or fusion of transport vesicles to their target membrane. This Arabidopsis thaliana (Mouse-ear cress) protein is Vesicle-associated membrane protein 723.